Here is a 444-residue protein sequence, read N- to C-terminus: Probable D-serine dehydratase (444 aa).

The residue at position 118 (Lys-118) is an N6-(pyridoxal phosphate)lysine.

The protein belongs to the serine/threonine dehydratase family. DsdA subfamily. It depends on pyridoxal 5'-phosphate as a cofactor.

The catalysed reaction is D-serine = pyruvate + NH4(+). The chain is Probable D-serine dehydratase from Acinetobacter baumannii (strain ACICU).